The sequence spans 116 residues: Somatostatin (116 aa).

The first 24 residues, 1-24 (MLSCRLQCALAALCIVLALGGVTG), serve as a signal peptide directing secretion. Positions 35-88 (LQKSLAAATGKQELAKYFLAELLSEPNQTENDALEPEDLPQAAEQDEMRLELQR) are excised as a propeptide. Position 43 is a threonine amide (threonine 43). A disulfide bridge connects residues cysteine 105 and cysteine 116.

It belongs to the somatostatin family. C-terminal amidation of the neuronostatin peptide is required for its biological activity, including for the regulation of mean arterial pressure. In terms of tissue distribution, in the pancreas, somatostatin is expressed in delta cells of the islets of Langerhans. In the stomach, it is expressed in parietal cells of oxyntic mucosa and in the small intestine, it is found in the villus (at protein level). Neuronostatin is expressed in the pancreas in delta cells of the islets of Langerhans, as well as in the stomach, in parietal cells of oxyntic mucosa and in the small intestine, in the villus (at protein level).

Its subcellular location is the secreted. In terms of biological role, inhibits the secretion of pituitary hormones, including that of growth hormone/somatotropin (GH1), PRL, ACTH, luteinizing hormone (LH) and TSH. Also impairs ghrelin- and GnRH-stimulated secretion of GH1 and LH; the inhibition of ghrelin-stimulated secretion of GH1 can be further increased by neuronostatin. Functionally, may enhance low-glucose-induced glucagon release by pancreatic alpha cells. This effect may be mediated by binding to GPR107 and PKA activation. May regulate cardiac contractile function. May compromise cardiomyocyte viability. In the central nervous system, may impair memory retention and may affect hippocampal excitability. May also have anxiolytic and anorexigenic effects. May play a role in arterial pressure regulation. May inhibit basal, but not ghrelin- or GnRH-stimulated secretion of GH1 or LH, but does not affect the release of other pituitary hormones, including PRL, ACTH, FSH or TSH. Potentiates inhibitory action of somatostatin on ghrelin-stimulated secretion of GH1, but not that on GnRH-stimulated secretion of LH. This is Somatostatin (Sst) from Mus musculus (Mouse).